A 285-amino-acid chain; its full sequence is Acetylglutamate kinase (285 aa).

Residues 69 to 70 (GG), Arg91, and Asn183 each bind substrate.

This sequence belongs to the acetylglutamate kinase family. ArgB subfamily.

It localises to the cytoplasm. It carries out the reaction N-acetyl-L-glutamate + ATP = N-acetyl-L-glutamyl 5-phosphate + ADP. It functions in the pathway amino-acid biosynthesis; L-arginine biosynthesis; N(2)-acetyl-L-ornithine from L-glutamate: step 2/4. In terms of biological role, catalyzes the ATP-dependent phosphorylation of N-acetyl-L-glutamate. The polypeptide is Acetylglutamate kinase (Jannaschia sp. (strain CCS1)).